The sequence spans 440 residues: FAD-dependent monooxygenase afoD (440 aa).

The chain crosses the membrane as a helical span at residues 10–30 (PLSIAIIGGGIIGLMTALGLL). 3 residues coordinate FAD: Glu-41, Leu-145, and Asp-320. The N-linked (GlcNAc...) asparagine glycan is linked to Asn-352.

This sequence belongs to the paxM FAD-dependent monooxygenase family. The cofactor is FAD.

It is found in the membrane. Functionally, FAD-dependent monooxygenase; part of the gene cluster that mediates the biosynthesis of asperfuranone, a probable antitumor agent. The polyketide synthase afoG is responsible for producing the 3,5-dimethyloctadienone moiety from acetyl-CoA, three malonyl-CoA, and two S-adenosyl methionines (SAM). The 3,5-dimethyloctadienone moiety is then loaded onto the SAT domain of afoE and extended with four malonyl-CoA and one SAM, which leads to the formation of 2,4-dihydroxy-6-(5,7-dimethyl-2-oxo-trans-3-trans-5-nonadienyl)-3-methylbenzaldehyde (compound 2) after reductive release and aldol condensation. AfoD is the next enzyme in the biosynthesis sequence and hydroxylates the side chain at the benzylic position of compound 2. After benzylic hydroxylation, a furan ring is formed after five-member ring hemiacetal formation and water elimination. AfoF and afoC are proposed to oxidize the R-diketone proton and to reduce the unconjugated carbonyl group, respectively, to generate asperfuranone. Since no intermediates could be isolated from afoF and afoC deletants, the sequence of these two enzymes is not fully understood. Moreover, since afoC deletant still produces a small amount of asperfuranone, other endogenous oxidoreductases might catalyze the same reaction with much less efficiency. The polypeptide is FAD-dependent monooxygenase afoD (Emericella nidulans (strain FGSC A4 / ATCC 38163 / CBS 112.46 / NRRL 194 / M139) (Aspergillus nidulans)).